An 8886-amino-acid chain; its full sequence is Obscurin (8886 aa).

Ig-like domains follow at residues 9–99 (PRFL…LRVD), 109–201 (PHFL…LVVD), 234–320 (PPSP…QTYS), and 329–415 (PTVP…AELS). The cysteines at positions 30 and 81 are disulfide-linked. Positions 135-165 (SPQPAVSWSKDGRRLGPPDAPHVRVEEHGES) are disordered. The segment covering 144-164 (KDGRRLGPPDAPHVRVEEHGE) has biased composition (basic and acidic residues). 2 disulfides stabilise this stretch: C257–C309 and C352–C402. S393 bears the Phosphoserine mark. Residues 513–610 (PPADPVVKAK…FPGTMHLVPM (98 aa)) enclose the Fibronectin type-III 1 domain. Ig-like domains follow at residues 702 to 793 (PSSK…QDIT), 859 to 951 (PKLV…VAEP), 951 to 1043 (PKLV…VAEP), 1043 to 1135 (PKMV…VTEP), 1135 to 1227 (PKLV…VAEP), 1227 to 1319 (PKLV…VTEP), 1319 to 1407 (PKLV…FRLD), 1411 to 1503 (PKLV…VAEP), 1503 to 1595 (PKLV…VAEP), 1595 to 1687 (PKLA…VAEP), 1687 to 1779 (PKLA…VAEP), 1779 to 1871 (PKLA…VAEP), 1871 to 1963 (PKLM…VAEP), 1963 to 2051 (PKLV…FRLD), 2055 to 2147 (TRLM…VAEA), 2152 to 2241 (PERP…EEVA), 2242 to 2325 (AKFS…ARLT), 2329 to 2415 (PRVV…AALR), 2420 to 2504 (PVLF…AKLN), 2598 to 2681 (PVSF…ASLR), 2721 to 2812 (PVTL…QSIT), 2900 to 2984 (PVVL…AEVT), 3078 to 3162 (PVVF…SKVS), 3258 to 3342 (PVDI…AKLC), 3348 to 3431 (NRFT…ARLL), 3527 to 3610 (PSIF…SSIV), 3616 to 3700 (PVRF…ATLT), 3785 to 3876 (ATLT…ATLT), 3881 to 3964 (PAKF…ATLT), 4042 to 4125 (PTKF…ATLS), 4130 to 4213 (PSRF…ATLS), 4219 to 4301 (PRFI…ATLN), 4307 to 4389 (PRFI…AVLT), 4395 to 4477 (PKFT…ATLS), 4483 to 4565 (PRFI…ATLS), 4571 to 4653 (PRFI…ATLS), 4659 to 4741 (PRFI…ATLS), 4746 to 4829 (PAKF…ATLS), 4833 to 4916 (PQVV…TSAT), 4923 to 5007 (PVRF…ARLS), 5013 to 5105 (PKFK…PEVT), 5378 to 5464 (LEVL…ARLS), and 5557 to 5659 (PQMV…TFNV). 14 disulfides stabilise this stretch: C885/C935, C977/C1027, C1069/C1119, C1161/C1211, C1253/C1303, C1345/C1395, C1437/C1487, C1529/C1579, C1621/C1671, C1713/C1763, C1805/C1855, C1897/C1947, C1989/C2039, and C2081/C2131. A disulfide bridge connects residues C2263 and C2313. Disulfide bonds link C2620-C2669, C2743-C2793, C2922-C2972, C3100-C3150, C3280-C3330, C3369-C3419, C3549-C3599, and C3638-C3688. S3321 bears the Phosphoserine mark. S3802 is modified (phosphoserine). 14 cysteine pairs are disulfide-bonded: C3815–C3864, C3903–C3952, C4064–C4113, C4152–C4201, C4240–C4289, C4328–C4377, C4416–C4465, C4504–C4553, C4592–C4641, C4680–C4729, C4768–C4817, C4856–C4906, C4945–C4995, and C5034–C5086. S4960 is modified (phosphoserine). Residues 5471–5569 (PPEDAEVVGR…VKIAPAPAPA (99 aa)) form the Fibronectin type-III 2 domain. C5590 and C5643 are joined by a disulfide. S5699 carries the post-translational modification Phosphoserine. The interval 5700–5736 (REPTLDSISELPEEDSRVQHLRQEAEETAPDLSEGYS) is disordered. Position 5703 is a phosphothreonine (T5703). Phosphoserine is present on S5706. Over residues 5713–5724 (EDSRVQHLRQEA) the composition is skewed to basic and acidic residues. T5737 is subject to Phosphothreonine. Residue S5754 is modified to Phosphoserine. One can recognise an IQ domain in the interval 5821 to 5850 (LDKAAVKIQAAFKGYKVRKEMKQQEGPVFS). The region spanning 5847–5930 (PVFSRTFGDT…QVSTKSGRVS (84 aa)) is the Ig-like 48 domain. C5868 and C5920 are joined by a disulfide. The interval 5977-5996 (EEELFLSADEGPGEPEEPAD) is disordered. Ig-like domains follow at residues 6077–6166 (PVFL…AELR), 6209–6298 (PQVL…ARLL), and 6320–6416 (PRIL…LHIS). C6098 and C6150 are disulfide-bonded. Residues 6504-6546 (KLQVPGGDSDEETKTPSASPRHGRSRPSSSVQESSSESEDGDS) are disordered. The residue at position 6512 (S6512) is a Phosphoserine. Phosphothreonine is present on T6518. The segment covering 6519 to 6538 (PSASPRHGRSRPSSSVQESS) has biased composition (low complexity). S6520 and S6522 each carry phosphoserine. The SH3 domain occupies 6549 to 6616 (EIFDIYVVTA…SPAYLDKRLK (68 aa)). The 185-residue stretch at 6642–6826 (RLSSVIQELL…SALPQRAENK (185 aa)) folds into the DH domain. A PH domain is found at 6844–6953 (EPIRQGHFIV…WVKEICGIQQ (110 aa)). R6924 is a binding site for a 1,2-diacyl-sn-glycero-3-phospho-(1D-myo-inositol-4,5-bisphosphate). R6929 is an a 1,2-diacyl-sn-glycero-3-phospho-(1D-myo-inositol-3,4-bisphosphate) binding site. 2 Ig-like domains span residues 6963 to 7046 (PEFE…GNAS) and 7057 to 7147 (PRFV…GELY). Cystine bridges form between C6984-C7036 and C7078-C7131. Positions 7200 to 7257 (ALGPSPGDLPNTRQSEPPAFEEAASQIPGAASGTPEVSQPGTHKGLEQETTSSGSQGW) are disordered. Over residues 7247-7257 (QETTSSGSQGW) the composition is skewed to polar residues. The 89-residue stretch at 7306–7394 (PSMQVTIEDV…GQVLCKAELL (89 aa)) folds into the Ig-like 54 domain. One can recognise a Protein kinase 1 domain in the interval 7416-7669 (YDVQEEIGRG…TSQCLAHPWF (254 aa)). ATP is bound by residues 7422 to 7430 (IGRGVFGFV) and K7445. Catalysis depends on D7535, which acts as the Proton acceptor. Disordered regions lie at residues 7717-7810 (GPPD…SPGC), 7879-8106 (EQAS…TTRK), and 8150-8180 (SSEE…VPLR). S7779 is subject to Phosphoserine. The segment covering 7793–7804 (AAVPASPQSAGP) has biased composition (low complexity). The span at 7941 to 7952 (TTAKDRGHKEGF) shows a compositional bias: basic and acidic residues. Polar residues predominate over residues 7986 to 7996 (SCHSELGSGSQ). Composition is skewed to low complexity over residues 8000-8014 (GPPS…PPQS) and 8053-8073 (GSLS…ASQV). Phosphoserine is present on S8161. In terms of domain architecture, Ig-like 55 spans 8380-8464 (KGRDQELSDE…VSNPLGTAVT (85 aa)). C8401 and C8453 form a disulfide bridge. Residues 8474–8566 (PSSSPRPEVG…PSEQVLLGGP (93 aa)) form the Fibronectin type-III 3 domain. Residues 8590-8842 (FAFQMQIRRG…ASTCLQCGWL (253 aa)) enclose the Protein kinase 2 domain. ATP contacts are provided by residues 8596 to 8604 (IRRGRFSVV) and K8619. The active-site Proton acceptor is the D8709.

The protein belongs to the protein kinase superfamily. CAMK Ser/Thr protein kinase family. In terms of assembly, interacts (via protein kinase domain 1) with CDH2 and (via protein kinase domain 1) with ATP1B1. Isoform 2 is found in a complex with DSG2, DESM, GJA1, CDH2 and VCL. Isoform 3 is found in a complex with DSG2, DESM, GJA1, CDH2, ANK3 and VCL. The cofactor is Mg(2+). Post-translationally, autophosphorylated by protein kinase domain 1 and 2. In terms of processing, two small isoforms, one probably containing protein kinase domain 2 and a partial protein kinase domain 1 and one containing only protein kinase domain 2, are glycosylated. Expressed in skeletal muscles including flexor digitorum brevis (FDB), soleus and tibialis anterior muscles, and to a lesser extent in heart muscles (at protein level). Isoform 2 and isoform 3 are expressed in the myocardium (at protein level).

It localises to the cytoplasm. Its subcellular location is the myofibril. The protein resides in the sarcomere. It is found in the m line. The protein localises to the z line. It localises to the cell membrane. Its subcellular location is the sarcolemma. The protein resides in the nucleus. It is found in the secreted. The enzyme catalyses L-seryl-[protein] + ATP = O-phospho-L-seryl-[protein] + ADP + H(+). The catalysed reaction is L-threonyl-[protein] + ATP = O-phospho-L-threonyl-[protein] + ADP + H(+). Its function is as follows. Structural component of striated muscles which plays a role in myofibrillogenesis. Probably involved in the assembly of myosin into sarcomeric A bands in striated muscle. Has serine/threonine protein kinase activity and phosphorylates N-cadherin CDH2 and sodium/potassium-transporting ATPase subunit ATP1B1. Binds (via the PH domain) strongly to phosphatidylinositol 3,4-bisphosphate (PtdIns(3,4)P2) and phosphatidylinositol 4,5-bisphosphate (PtdIns(4,5)P2), and to a lesser extent to phosphatidylinositol 3-phosphate (PtdIns(3)P), phosphatidylinositol 4-phosphate (PtdIns(4)P), phosphatidylinositol 5-phosphate (PtdIns(5)P) and phosphatidylinositol 3,4,5-trisphosphate (PtdIns(3,4,5)P3). Isoform 2 and isoform 3: bind phosphatidylinositol bisphosphates (PIP2s) via their PH domains and negatively regulate the PI3K/AKT/mTOR signaling pathway, thus contributing to the regulation of cardiomyocyte size and adhesion. The sequence is that of Obscurin from Mus musculus (Mouse).